The primary structure comprises 109 residues: Protein ELF4-LIKE 3 (109 aa).

The segment at serine 88–alanine 109 is disordered.

It belongs to the EARLY FLOWERING 4 family. As to quaternary structure, homodimer.

The protein resides in the nucleus. Component of the central CCA1/LHY-TOC1 feedback loop in the circadian clock that promotes clock accuracy and is required for sustained rhythms in the absence of daily light/dark cycles. This chain is Protein ELF4-LIKE 3 (EFL3), found in Arabidopsis thaliana (Mouse-ear cress).